The chain runs to 43 residues: Metallothionein-3 (43 aa).

The protein belongs to the metallothionein superfamily. Type 5 family.

In terms of biological role, this protein binds cations of several transition elements. Thought to be involved in metal ion homeostasis. The sequence is that of Metallothionein-3 (MtnC) from Drosophila melanogaster (Fruit fly).